The following is a 247-amino-acid chain: Phycocyanobilin:ferredoxin oxidoreductase (247 aa).

The protein belongs to the HY2 family.

The enzyme catalyses (2R,3Z)-phycocyanobilin + 4 oxidized [2Fe-2S]-[ferredoxin] = biliverdin IXalpha + 4 reduced [2Fe-2S]-[ferredoxin] + 4 H(+). Functionally, catalyzes the four-electron reduction of biliverdin IX-alpha (2-electron reduction at both the A and D rings); the reaction proceeds via an isolatable 2-electron intermediate, 181,182-dihydrobiliverdin. This chain is Phycocyanobilin:ferredoxin oxidoreductase, found in Synechococcus sp. (strain CC9605).